The chain runs to 126 residues: Protein Wnt-1 (126 aa).

A lipid anchor (O-palmitoleoyl serine; by PORCN) is attached at serine 1. Cysteine 92 and cysteine 107 form a disulfide bridge. N-linked (GlcNAc...) asparagine glycosylation is found at asparagine 93 and asparagine 123.

It belongs to the Wnt family. In terms of processing, palmitoleoylation is required for efficient binding to frizzled receptors. Palmitoleoylation is necessary for proper trafficking to cell surface. Depalmitoleoylated by NOTUM, leading to inhibit Wnt signaling pathway.

The protein localises to the secreted. The protein resides in the extracellular space. It localises to the extracellular matrix. Ligand for members of the frizzled family of seven transmembrane receptors. Acts in the canonical Wnt signaling pathway by promoting beta-catenin-dependent transcriptional activation. Plays an essential role in the development of the embryonic brain and central nervous system (CNS). Has a role in osteoblast function, bone development and bone homeostasis. The chain is Protein Wnt-1 (WNT-1) from Pituophis melanoleucus (Pine snake).